The chain runs to 250 residues: MYKLVLMRHGESQWNLENRFTGWTDVDLTETGREQARKAGELLKREGYAFDLAYTSVLKRAIRTLWIALDAMDAMYTPVGINWRLNERHYGQLQGLNKAETAAKYGDEQVLIWRRAYAIAPEPLDLEDPRHPRFDGRYAKIPADQLPATECLKDTVARVLPFWNESIAPAIRAGRRVLVAAHGNSLRALIKHLDNVSDDDIVGVNIPTGQPLVYELDEDLKPIRHYYLGDAAEIEAAMAAVAAQGKAKKD.

Substrate-binding positions include 8–15 (RHGESQWN), 21–22 (TG), Arg60, 87–90 (ERHY), Lys98, 114–115 (RR), and 183–184 (GN). His9 functions as the Tele-phosphohistidine intermediate in the catalytic mechanism. The active-site Proton donor/acceptor is the Glu87.

This sequence belongs to the phosphoglycerate mutase family. BPG-dependent PGAM subfamily. In terms of assembly, homodimer.

It carries out the reaction (2R)-2-phosphoglycerate = (2R)-3-phosphoglycerate. It functions in the pathway carbohydrate degradation; glycolysis; pyruvate from D-glyceraldehyde 3-phosphate: step 3/5. Catalyzes the interconversion of 2-phosphoglycerate and 3-phosphoglycerate. This is 2,3-bisphosphoglycerate-dependent phosphoglycerate mutase from Bordetella pertussis (strain Tohama I / ATCC BAA-589 / NCTC 13251).